Reading from the N-terminus, the 269-residue chain is Thymidylate synthase (269 aa).

Arg-21 contributes to the dUMP binding site. His-51 serves as a coordination point for (6R)-5,10-methylene-5,6,7,8-tetrahydrofolate. 126-127 (RR) is a dUMP binding site. Catalysis depends on Cys-146, which acts as the Nucleophile. DUMP is bound by residues 171-174 (RSGD), Asn-182, and 212-214 (HLY). Asp-174 contributes to the (6R)-5,10-methylene-5,6,7,8-tetrahydrofolate binding site. A (6R)-5,10-methylene-5,6,7,8-tetrahydrofolate-binding site is contributed by Ala-268.

The protein belongs to the thymidylate synthase family. Bacterial-type ThyA subfamily. In terms of assembly, homodimer.

It localises to the cytoplasm. It carries out the reaction dUMP + (6R)-5,10-methylene-5,6,7,8-tetrahydrofolate = 7,8-dihydrofolate + dTMP. Its pathway is pyrimidine metabolism; dTTP biosynthesis. Functionally, catalyzes the reductive methylation of 2'-deoxyuridine-5'-monophosphate (dUMP) to 2'-deoxythymidine-5'-monophosphate (dTMP) while utilizing 5,10-methylenetetrahydrofolate (mTHF) as the methyl donor and reductant in the reaction, yielding dihydrofolate (DHF) as a by-product. This enzymatic reaction provides an intracellular de novo source of dTMP, an essential precursor for DNA biosynthesis. In Methylocella silvestris (strain DSM 15510 / CIP 108128 / LMG 27833 / NCIMB 13906 / BL2), this protein is Thymidylate synthase.